The primary structure comprises 247 residues: Uroporphyrinogen-III C-methyltransferase (247 aa).

Residues proline 12, 117 to 118 (TA), methionine 168, alanine 197, and alanine 225 contribute to the S-adenosyl-L-homocysteine site.

This sequence belongs to the precorrin methyltransferase family.

The catalysed reaction is uroporphyrinogen III + 2 S-adenosyl-L-methionine = precorrin-2 + 2 S-adenosyl-L-homocysteine + H(+). It participates in cofactor biosynthesis; adenosylcobalamin biosynthesis; precorrin-2 from uroporphyrinogen III: step 1/1. It functions in the pathway porphyrin-containing compound metabolism; siroheme biosynthesis; precorrin-2 from uroporphyrinogen III: step 1/1. Its function is as follows. Catalyzes the two successive C-2 and C-7 methylation reactions involved in the conversion of uroporphyrinogen III to precorrin-2 via the intermediate formation of precorrin-1. It is a step in the biosynthesis of both cobalamin (vitamin B12) and siroheme. The sequence is that of Uroporphyrinogen-III C-methyltransferase from Pseudomonas fluorescens.